We begin with the raw amino-acid sequence, 81 residues long: MDTKVACLLLIILGALTVQGAVSGNKRINPLHARQWGEQCMNSMEEFCVPEYSECPPEYEPCREDKYCENDYYCCCRYSGY.

Positions 1 to 23 (MDTKVACLLLIILGALTVQGAVS) are cleaved as a signal peptide. Residues 24–25 (GN) constitute a propeptide that is removed on maturation.

Belongs to the Cnidaria small cysteine-rich protein (SCRiP) family. beta subfamily. Contains 4 disulfide bonds.

The protein resides in the secreted. It is found in the nematocyst. In terms of biological role, induces neurotoxic symptoms on zebrafish. Has also been claimed to be implied in calcification, but tests on homolog proteins suggest that proteins of this family have a neurotoxic function and not a calcification function. This chain is Small cysteine-rich protein 6, found in Orbicella faveolata (Mountainous star coral).